Consider the following 67-residue polypeptide: MGGLVVLLVGLLTALMSVVSYYVSPKGNNTSTWQMSLILTFSCCYLLWAITYLAQLHPLEAPSRVLE.

The Lumenal segment spans residues 1-2 (MG). The helical transmembrane segment at 3–23 (GLVVLLVGLLTALMSVVSYYV) threads the bilayer. Residues 24-35 (SPKGNNTSTWQM) are Cytoplasmic-facing. Residues 36 to 56 (SLILTFSCCYLLWAITYLAQL) traverse the membrane as a helical segment. Residues 57–67 (HPLEAPSRVLE) lie on the Lumenal side of the membrane.

It belongs to the V-ATPase e1/e2 subunit family. As to quaternary structure, V-ATPase is a heteromultimeric enzyme composed of a peripheral catalytic V1 complex (components A to H) attached to an integral membrane V0 proton pore complex (components: a, c, c', c'', d, e, f and VOA1).

The protein localises to the vacuole membrane. In terms of biological role, subunit of the V0 complex of vacuolar(H+)-ATPase (V-ATPase), a multisubunit enzyme composed of a peripheral complex (V1) that hydrolyzes ATP and a membrane integral complex (V0) that translocates protons. V-ATPase is responsible for acidifying and maintaining the pH of intracellular compartments. This chain is V-type proton ATPase subunit e (vma9), found in Schizosaccharomyces pombe (strain 972 / ATCC 24843) (Fission yeast).